Here is a 204-residue protein sequence, read N- to C-terminus: Ancillary SecYEG translocon subunit (204 aa).

Over M1–K23 the chain is Cytoplasmic. Residues F24–S44 traverse the membrane as a helical segment. The Periplasmic portion of the chain corresponds to H45–L204.

The protein belongs to the YfgM family. In terms of assembly, interacts with the SecYEG translocon. Forms a complex with PpiD.

The protein localises to the cell inner membrane. Functionally, may mediate protein transfer from the SecYEG translocon to the periplasmic chaperone network via its periplasmic C-terminal region. This Aggregatibacter actinomycetemcomitans (Actinobacillus actinomycetemcomitans) protein is Ancillary SecYEG translocon subunit (1057).